Here is a 364-residue protein sequence, read N- to C-terminus: O-methyltransferase 1 (364 aa).

Positions 183, 207, 230, 250, and 264 each coordinate S-adenosyl-L-homocysteine. Aspartate 230 provides a ligand contact to S-adenosyl-L-methionine. Histidine 268 serves as the catalytic Proton acceptor.

This sequence belongs to the class I-like SAM-binding methyltransferase superfamily. Cation-independent O-methyltransferase family. In terms of assembly, homodimer.

The enzyme catalyses dopamine + S-adenosyl-L-methionine = 3-methoxytyramine + S-adenosyl-L-homocysteine + H(+). The catalysed reaction is 3,4-dihydroxy-5-methoxyphenethylamine + S-adenosyl-L-methionine = 4-hydroxy-3,5-dimethoxyphenethylamine + S-adenosyl-L-homocysteine + H(+). It functions in the pathway aromatic compound metabolism. The protein operates within alkaloid biosynthesis. O-methyltransferase participating in the biosynthesis of natural products derived from phenylethylamine, including mescaline, a natural hallucinogen potentially used in psychotherapeutic treatments. Catalyzes the O-methylation of mescaline meta hydroxyl groups, using dopamine and 3,4-dihydroxy-5-methoxyphenethylamine as substrates. This chain is O-methyltransferase 1, found in Lophophora williamsii (Peyote).